The chain runs to 63 residues: 2-hydroxymuconate tautomerase (63 aa).

Pro-2 (proton acceptor; via imino nitrogen) is an active-site residue.

It belongs to the 4-oxalocrotonate tautomerase family. Homohexamer.

It catalyses the reaction (2Z,4E)-2-hydroxyhexa-2,4-dienedioate = (3E)-2-oxohex-3-enedioate. It functions in the pathway xenobiotic degradation; toluene degradation. Its pathway is xenobiotic degradation; xylene degradation. Its function is as follows. Catalyzes the ketonization of 2-hydroxymuconate stereoselectively to yield 2-oxo-3-hexenedioate. This Pseudomonas putida (Arthrobacter siderocapsulatus) protein is 2-hydroxymuconate tautomerase (xylH).